A 458-amino-acid polypeptide reads, in one-letter code: Monomethylamine methyltransferase MtmB2 (458 aa).

Position 202 (pyrrolysine 202) is a non-standard amino acid, pyrrolysine.

The protein belongs to the monomethylamine methyltransferase family. Can form a complex with MtmC (MtmC1 or MtmC2).

It carries out the reaction Co(I)-[methylamine-specific corrinoid protein] + methylamine + H(+) = methyl-Co(III)-[methylamine-specific corrinoid protein] + NH4(+). It participates in one-carbon metabolism; methanogenesis from methylamine. Functionally, catalyzes the transfer of the methyl group from monomethylamine to the corrinoid cofactor of MtmC (MtmC1 or MtmC2). This chain is Monomethylamine methyltransferase MtmB2 (mtmB2), found in Methanosarcina barkeri.